Reading from the N-terminus, the 274-residue chain is Pyridoxal phosphate homeostasis protein (274 aa).

Serine 6 is subject to Phosphoserine. Residue lysine 47 is modified to N6-(pyridoxal phosphate)lysine. A Phosphotyrosine modification is found at tyrosine 69. Lysine 125 is modified (N6-succinyllysine). 2 positions are modified to phosphoserine: serine 226 and serine 244.

It belongs to the pyridoxal phosphate-binding protein YggS/PROSC family.

Its function is as follows. Pyridoxal 5'-phosphate (PLP)-binding protein, which may be involved in intracellular homeostatic regulation of pyridoxal 5'-phosphate (PLP), the active form of vitamin B6. This chain is Pyridoxal phosphate homeostasis protein, found in Mus musculus (Mouse).